Consider the following 91-residue polypeptide: uncharacterized protein (91 aa).

The signal sequence occupies residues 1–21; the sequence is MKIISKMLVGALALAVTNVYA.

It belongs to the BhsA/McbA family.

It is found in the periplasm. This is an uncharacterized protein from Escherichia coli (strain K12).